Reading from the N-terminus, the 165-residue chain is V-type proton ATPase 16 kDa proteolipid subunit (165 aa).

The Lumenal segment spans residues M1–T10. A helical transmembrane segment spans residues A11–G33. At T34–S55 the chain is on the cytoplasmic side. The chain crosses the membrane as a helical span at residues I56 to I76. Residues S77–H95 lie on the Lumenal side of the membrane. Residues L96–G117 traverse the membrane as a helical segment. The Cytoplasmic segment spans residues D118 to K129. Residues L130 to L155 traverse the membrane as a helical segment. Residues S156–D165 lie on the Lumenal side of the membrane.

The protein belongs to the V-ATPase proteolipid subunit family. In terms of assembly, V-ATPase is a heteromultimeric enzyme composed of a peripheral catalytic V1 complex (main components: subunits A, B, C, D, E, and F) attached to an integral membrane V0 proton pore complex (main component: the proteolipid protein; which is present as a hexamer that forms the proton-conducting pore). As to expression, higher expression in leaves, followed by roots and weakly in flowers. Expression in leaves is light-dependent.

Its subcellular location is the vacuole membrane. In terms of biological role, proton-conducting pore forming subunit of the membrane integral V0 complex of vacuolar ATPase. V-ATPase is responsible for acidifying a variety of intracellular compartments in eukaryotic cells. Necessary for the crassulacean acid metabolism. This Kalanchoe daigremontiana (Devil's backbone) protein is V-type proton ATPase 16 kDa proteolipid subunit.